We begin with the raw amino-acid sequence, 143 residues long: Ribosome-binding factor A (143 aa).

The disordered stretch occupies residues 123–143; sequence VRAQAAQAKPAGEANPYKERN. A compositionally biased stretch (low complexity) spans 124-136; it reads RAQAAQAKPAGEA.

It belongs to the RbfA family. In terms of assembly, monomer. Binds 30S ribosomal subunits, but not 50S ribosomal subunits or 70S ribosomes.

Its subcellular location is the cytoplasm. Its function is as follows. One of several proteins that assist in the late maturation steps of the functional core of the 30S ribosomal subunit. Associates with free 30S ribosomal subunits (but not with 30S subunits that are part of 70S ribosomes or polysomes). Required for efficient processing of 16S rRNA. May interact with the 5'-terminal helix region of 16S rRNA. In Corynebacterium urealyticum (strain ATCC 43042 / DSM 7109), this protein is Ribosome-binding factor A.